A 337-amino-acid chain; its full sequence is MAKIGVLGAGTWGMALARMLSNSGHEVTVWSALPQEVDELSRTRRQKNLPGMVIPDEIKFTKEIAEACQDKDIILFAVPSVFVRSIAKTAAAFIPDGQIIVDVAKGIEPDTLLTLTEVIADELNKDGKHGNVHYVAMSGPTHAEEVAKDLPTTIVSACEDQAVAKKVQDVFMNKNMRVYTNSDRLGVELCGALKNVIALASGICSGLGYGDNMRAALIIRGMAEIKRLGLKMGGKEDSFDGLAGMGDLIVTATSKESRNNNAGYLIGKGKSAEEAKKEVGMVVEGINAIPAALELADKYDVEMPIVFAVDAVVNRGADARETVDALMLREKKSEMTK.

NADPH is bound by residues Thr-11, Trp-12, and Lys-105. Sn-glycerol 3-phosphate contacts are provided by Lys-105, Gly-139, and Thr-141. NADPH is bound at residue Ala-143. The sn-glycerol 3-phosphate site is built by Lys-194, Asp-247, Ser-257, Arg-258, and Asn-259. The active-site Proton acceptor is the Lys-194. Arg-258 contacts NADPH. NADPH-binding residues include Val-282 and Glu-284.

This sequence belongs to the NAD-dependent glycerol-3-phosphate dehydrogenase family.

Its subcellular location is the cytoplasm. It catalyses the reaction sn-glycerol 3-phosphate + NAD(+) = dihydroxyacetone phosphate + NADH + H(+). It carries out the reaction sn-glycerol 3-phosphate + NADP(+) = dihydroxyacetone phosphate + NADPH + H(+). Its pathway is membrane lipid metabolism; glycerophospholipid metabolism. Functionally, catalyzes the reduction of the glycolytic intermediate dihydroxyacetone phosphate (DHAP) to sn-glycerol 3-phosphate (G3P), the key precursor for phospholipid synthesis. The polypeptide is Glycerol-3-phosphate dehydrogenase [NAD(P)+] 2 (Lactobacillus delbrueckii subsp. bulgaricus (strain ATCC 11842 / DSM 20081 / BCRC 10696 / JCM 1002 / NBRC 13953 / NCIMB 11778 / NCTC 12712 / WDCM 00102 / Lb 14)).